The primary structure comprises 476 residues: MAKEQVQAITKMEEDFAQWYTDIVKKAELVDYSSVKGCMILRPYGYALWENMQKVMDEKLKATGHENVYMPMFIPESLLQKEKDHVEGFAPEVAWVTHGGDEKLAERLCVRPTSETLFCEHFSKIVQSYNDLPKLYNQWCSVVRWEKTTRPFLRTTEFLWQEGHTIHETAEESQAETLNILNLYASFCEDYLAIPVIKGQKTEKEKFAGAKATYTIESLMHDGKALQTGTSHNFGTNFSEAFDIKFLDRNGKWQYVHQTSWGVSTRMIGGLIMVHSDNNGLVMPPKVAPVQVVIVPIAQHKEGVLAKAIELQGHIQKVARVKIDASNKTPGWKFNEYEMKGIPIRLEVGPKDIEKNQVVLVRRDTKEKEFISMDQLEERIPALLEEIHNSLFNKAKVFRDENTYSVTSFEEMKKVADEKQGFIKAMWCGEVACEEKLKEEVGVSSRCMPFEQEHLADECVCCGKEAKQMVYWGKAY.

This sequence belongs to the class-II aminoacyl-tRNA synthetase family. ProS type 3 subfamily. In terms of assembly, homodimer.

It is found in the cytoplasm. It carries out the reaction tRNA(Pro) + L-proline + ATP = L-prolyl-tRNA(Pro) + AMP + diphosphate. Functionally, catalyzes the attachment of proline to tRNA(Pro) in a two-step reaction: proline is first activated by ATP to form Pro-AMP and then transferred to the acceptor end of tRNA(Pro). This Bacillus thuringiensis subsp. konkukian (strain 97-27) protein is Proline--tRNA ligase 2.